Reading from the N-terminus, the 415-residue chain is Glutamate-1-semialdehyde 2,1-aminomutase (415 aa).

At Lys-260 the chain carries N6-(pyridoxal phosphate)lysine.

The protein belongs to the class-III pyridoxal-phosphate-dependent aminotransferase family. HemL subfamily. It depends on pyridoxal 5'-phosphate as a cofactor.

Its subcellular location is the cytoplasm. It catalyses the reaction (S)-4-amino-5-oxopentanoate = 5-aminolevulinate. The protein operates within porphyrin-containing compound metabolism; protoporphyrin-IX biosynthesis; 5-aminolevulinate from L-glutamyl-tRNA(Glu): step 2/2. The polypeptide is Glutamate-1-semialdehyde 2,1-aminomutase (Methanoculleus marisnigri (strain ATCC 35101 / DSM 1498 / JR1)).